A 153-amino-acid polypeptide reads, in one-letter code: Aspartate carbamoyltransferase regulatory chain (153 aa).

Zn(2+) contacts are provided by cysteine 109, cysteine 114, cysteine 138, and cysteine 141.

It belongs to the PyrI family. As to quaternary structure, contains catalytic and regulatory chains. It depends on Zn(2+) as a cofactor.

In terms of biological role, involved in allosteric regulation of aspartate carbamoyltransferase. The protein is Aspartate carbamoyltransferase regulatory chain of Salmonella arizonae (strain ATCC BAA-731 / CDC346-86 / RSK2980).